The sequence spans 151 residues: Transcription elongation factor GreA (151 aa).

The stretch at 41–62 (AEYHAAREKQSFIEGRIKELEA) forms a coiled coil.

Belongs to the GreA/GreB family.

Necessary for efficient RNA polymerase transcription elongation past template-encoded arresting sites. The arresting sites in DNA have the property of trapping a certain fraction of elongating RNA polymerases that pass through, resulting in locked ternary complexes. Cleavage of the nascent transcript by cleavage factors such as GreA or GreB allows the resumption of elongation from the new 3'terminus. GreA releases sequences of 2 to 3 nucleotides. This chain is Transcription elongation factor GreA, found in Cereibacter sphaeroides (strain ATCC 17023 / DSM 158 / JCM 6121 / CCUG 31486 / LMG 2827 / NBRC 12203 / NCIMB 8253 / ATH 2.4.1.) (Rhodobacter sphaeroides).